The primary structure comprises 207 residues: Outer-membrane lipoprotein LolB (207 aa).

The N-terminal stretch at 1–26 (MSKLKIDTKRRFSLLIALVLIISLSS) is a signal peptide. Cys27 is lipidated: N-palmitoyl cysteine. Cys27 carries S-diacylglycerol cysteine lipidation.

It belongs to the LolB family. In terms of assembly, monomer.

It localises to the cell outer membrane. Functionally, plays a critical role in the incorporation of lipoproteins in the outer membrane after they are released by the LolA protein. This chain is Outer-membrane lipoprotein LolB, found in Francisella tularensis subsp. tularensis (strain WY96-3418).